Reading from the N-terminus, the 445-residue chain is UDP-glucuronic acid decarboxylase 2 (445 aa).

Ala-2 is modified (N-acetylalanine). Over 2–43 (ASELINRRHETDQPTADAYYPKPIKPWFTVTRPMRYMLREQR) the chain is Cytoplasmic. The helical; Signal-anchor for type II membrane protein transmembrane segment at 44–64 (LIFVLVGIAIATLVFTIFPRS) threads the bilayer. Topologically, residues 65 to 445 (TQSTPYSDPF…AATTTKTTSA (381 aa)) are lumenal. An NAD(+)-binding site is contributed by 149–174 (DNFFTGRKENVMHHFSNPNFEMIRHD). Arg-258 lines the substrate pocket. The active-site Proton acceptor is the Tyr-261. 261–265 (YDEGK) serves as a coordination point for NAD(+). Asn-290 provides a ligand contact to substrate. Residue Arg-302 participates in NAD(+) binding. Substrate is bound by residues 303–307 (VVSNF), 320–327 (YGDGKQTR), and 387–391 (DPHKR).

This sequence belongs to the NAD(P)-dependent epimerase/dehydratase family. UDP-glucuronic acid decarboxylase subfamily. Homodimer. Requires NAD(+) as cofactor. Ubiquitous.

It localises to the golgi apparatus. The protein localises to the golgi stack membrane. It carries out the reaction UDP-alpha-D-glucuronate + H(+) = UDP-alpha-D-xylose + CO2. It functions in the pathway nucleotide-sugar biosynthesis; UDP-alpha-D-xylose biosynthesis; UDP-alpha-D-xylose from UDP-alpha-D-glucuronate: step 1/1. Catalyzes the NAD-dependent decarboxylation of UDP-glucuronic acid to UDP-xylose. Necessary for the biosynthesis of the core tetrasaccharide in glycosaminoglycan biosynthesis. The protein is UDP-glucuronic acid decarboxylase 2 (UXS2) of Arabidopsis thaliana (Mouse-ear cress).